The chain runs to 440 residues: Exosome complex component RRP45 (440 aa).

Residue Ser65 is modified to Phosphoserine. The residue at position 297 (Lys297) is an N6-acetyllysine; alternate. A Glycyl lysine isopeptide (Lys-Gly) (interchain with G-Cter in SUMO1); alternate cross-link involves residue Lys297. Residue Lys297 forms a Glycyl lysine isopeptide (Lys-Gly) (interchain with G-Cter in SUMO2); alternate linkage. Residues Ser306 and Ser346 each carry the phosphoserine modification. The tract at residues 341-362 (EGIENSWGHLEDSEKEDEDEGG) is disordered. A compositionally biased stretch (acidic residues) spans 353–362 (SEKEDEDEGG). 2 positions are modified to phosphoserine: Ser393 and Ser395. The segment at 404-440 (EPDKNPKKIRTQTISATQVKAPSKKPVKKRKKKRAAN) is disordered. The segment covering 425 to 440 (PSKKPVKKRKKKRAAN) has biased composition (basic residues).

Belongs to the RNase PH family. As to quaternary structure, component of the RNA exosome core complex (Exo-9), composed of EXOSC1, EXOSC2, EXOSC3, EXOSC4, EXOSC5, EXOSC6, EXOSC7, EXOSC8 and EXOSC9; within the complex interacts with EXOSC3, EXOSC4, EXOSC5 and DIS3. The catalytically inactive RNA exosome core complex (Exo-9) associates with the catalytic subunit EXOSC10/RRP6. Exo-9 may associate with DIS3 to form the nucleolar exosome complex, or DIS3L to form the cytoplasmic exosome complex. Exo-9 is formed by a hexameric base ring consisting of the heterodimers EXOSC4-EXOSC9, EXOSC5-EXOSC8 and EXOSC6-EXOSC7, and a cap ring consisting of EXOSC1, EXOSC2 and EXOSC3. The RNA exosome complex associates with cofactors C1D/RRP47, MPHOSPH6/MPP6 and MTREX/MTR4. Interacts (via C-terminus region) with SETX (via N-terminus domain); the interaction enhances SETX sumoylation. Interacts with DIS3; the interaction is direct.

It localises to the cytoplasm. It is found in the nucleus. The protein localises to the nucleolus. The protein resides in the nucleoplasm. Non-catalytic component of the RNA exosome complex which has 3'-&gt;5' exoribonuclease activity and participates in a multitude of cellular RNA processing and degradation events. In the nucleus, the RNA exosome complex is involved in proper maturation of stable RNA species such as rRNA, snRNA and snoRNA, in the elimination of RNA processing by-products and non-coding 'pervasive' transcripts, such as antisense RNA species and promoter-upstream transcripts (PROMPTs), and of mRNAs with processing defects, thereby limiting or excluding their export to the cytoplasm. The RNA exosome may be involved in Ig class switch recombination (CSR) and/or Ig variable region somatic hypermutation (SHM) by targeting AICDA deamination activity to transcribed dsDNA substrates. In the cytoplasm, the RNA exosome complex is involved in general mRNA turnover and specifically degrades inherently unstable mRNAs containing AU-rich elements (AREs) within their 3' untranslated regions, and in RNA surveillance pathways, preventing translation of aberrant mRNAs. It seems to be involved in degradation of histone mRNA. The catalytic inactive RNA exosome core complex of 9 subunits (Exo-9) is proposed to play a pivotal role in the binding and presentation of RNA for ribonucleolysis, and to serve as a scaffold for the association with catalytic subunits and accessory proteins or complexes. EXOSC9 binds to ARE-containing RNAs. The sequence is that of Exosome complex component RRP45 (EXOSC9) from Bos taurus (Bovine).